Here is a 79-residue protein sequence, read N- to C-terminus: Acyl carrier protein (79 aa).

The region spanning 3-78 (QEILEKVRSI…DAVSYIQEKK (76 aa)) is the Carrier domain. Ser-38 carries the O-(pantetheine 4'-phosphoryl)serine modification.

The protein belongs to the acyl carrier protein (ACP) family. 4'-phosphopantetheine is transferred from CoA to a specific serine of apo-ACP by AcpS. This modification is essential for activity because fatty acids are bound in thioester linkage to the sulfhydryl of the prosthetic group.

The protein localises to the cytoplasm. The protein operates within lipid metabolism; fatty acid biosynthesis. Its function is as follows. Carrier of the growing fatty acid chain in fatty acid biosynthesis. This Synechococcus sp. (strain RCC307) protein is Acyl carrier protein.